The primary structure comprises 200 residues: Dephospho-CoA kinase (200 aa).

The region spanning 3 to 200 (VIGLTGGIGS…KKYMTLAQGS (198 aa)) is the DPCK domain. 11–16 (GSGKTS) is a binding site for ATP.

Belongs to the CoaE family.

It is found in the cytoplasm. The catalysed reaction is 3'-dephospho-CoA + ATP = ADP + CoA + H(+). It functions in the pathway cofactor biosynthesis; coenzyme A biosynthesis; CoA from (R)-pantothenate: step 5/5. Its function is as follows. Catalyzes the phosphorylation of the 3'-hydroxyl group of dephosphocoenzyme A to form coenzyme A. The polypeptide is Dephospho-CoA kinase (Nitrosospira multiformis (strain ATCC 25196 / NCIMB 11849 / C 71)).